A 455-amino-acid polypeptide reads, in one-letter code: tRNA modification GTPase MnmE (455 aa).

Positions 24, 81, and 120 each coordinate (6S)-5-formyl-5,6,7,8-tetrahydrofolate. In terms of domain architecture, TrmE-type G spans 216–378 (GMTVVIAGRP…LREHLKACMG (163 aa)). Asn226 contributes to the K(+) binding site. GTP contacts are provided by residues 226–231 (NAGKSS), 245–251 (TDIAGTT), 270–273 (DTAG), 335–338 (NKAD), and 359–361 (SAR). Mg(2+) is bound at residue Ser230. Thr245, Ile247, and Thr250 together coordinate K(+). Thr251 is a binding site for Mg(2+). Position 455 (Lys455) interacts with (6S)-5-formyl-5,6,7,8-tetrahydrofolate.

It belongs to the TRAFAC class TrmE-Era-EngA-EngB-Septin-like GTPase superfamily. TrmE GTPase family. In terms of assembly, homodimer. Heterotetramer of two MnmE and two MnmG subunits. K(+) is required as a cofactor.

The protein localises to the cytoplasm. Functionally, exhibits a very high intrinsic GTPase hydrolysis rate. Involved in the addition of a carboxymethylaminomethyl (cmnm) group at the wobble position (U34) of certain tRNAs, forming tRNA-cmnm(5)s(2)U34. This is tRNA modification GTPase MnmE from Pseudomonas aeruginosa (strain ATCC 15692 / DSM 22644 / CIP 104116 / JCM 14847 / LMG 12228 / 1C / PRS 101 / PAO1).